The following is a 256-amino-acid chain: 5-keto-4-deoxy-D-glucarate aldolase (256 aa).

His-50 serves as the catalytic Proton acceptor. Gln-151 contributes to the substrate binding site. Glu-153 contributes to the Mg(2+) binding site. Ser-178 and Asp-179 together coordinate substrate. A Mg(2+)-binding site is contributed by Asp-179.

The protein belongs to the HpcH/HpaI aldolase family. KDGluc aldolase subfamily. As to quaternary structure, homohexamer; trimer of dimers. Requires Mg(2+) as cofactor.

It carries out the reaction 5-dehydro-4-deoxy-D-glucarate = 2-hydroxy-3-oxopropanoate + pyruvate. It catalyses the reaction 2-dehydro-3-deoxy-D-glucarate = 2-hydroxy-3-oxopropanoate + pyruvate. It participates in carbohydrate acid metabolism; galactarate degradation; D-glycerate from galactarate: step 2/3. Its function is as follows. Catalyzes the reversible retro-aldol cleavage of both 5-keto-4-deoxy-D-glucarate and 2-keto-3-deoxy-D-glucarate to pyruvate and tartronic semialdehyde. The polypeptide is 5-keto-4-deoxy-D-glucarate aldolase (Salmonella gallinarum (strain 287/91 / NCTC 13346)).